The chain runs to 36 residues: Photosystem I reaction center subunit VIII (36 aa).

A helical transmembrane segment spans residues 6 to 28; it reads LPSIFVPLVGLLFPAIAMVSLFF.

The protein belongs to the PsaI family.

It localises to the plastid. The protein localises to the chloroplast thylakoid membrane. In terms of biological role, may help in the organization of the PsaL subunit. This Nymphaea alba (White water-lily) protein is Photosystem I reaction center subunit VIII.